Reading from the N-terminus, the 78-residue chain is MPLTVKCPTCQTEVTWDETSKFKPFCSDRCKLIDLGDWAAEKNAIPVKPEFDPEMLDQLGYDEADFFMDDGSMDDKKQ.

The Zn(2+) site is built by Cys7, Cys10, Cys26, and Cys30.

Belongs to the DNA gyrase inhibitor YacG family. In terms of assembly, interacts with GyrB. The cofactor is Zn(2+).

In terms of biological role, inhibits all the catalytic activities of DNA gyrase by preventing its interaction with DNA. Acts by binding directly to the C-terminal domain of GyrB, which probably disrupts DNA binding by the gyrase. This Shewanella piezotolerans (strain WP3 / JCM 13877) protein is DNA gyrase inhibitor YacG.